Here is a 126-residue protein sequence, read N- to C-terminus: Large ribosomal subunit protein eL18 (126 aa).

This sequence belongs to the eukaryotic ribosomal protein eL18 family.

The protein is Large ribosomal subunit protein eL18 of Methanosarcina mazei (strain ATCC BAA-159 / DSM 3647 / Goe1 / Go1 / JCM 11833 / OCM 88) (Methanosarcina frisia).